Reading from the N-terminus, the 472-residue chain is Glutamate--tRNA ligase (472 aa).

The short motif at 10–20 is the 'HIGH' region element; the sequence is PSPTGYLHVGG. Zn(2+) contacts are provided by Cys99, Cys101, Cys126, and His128. The short motif at 238–242 is the 'KMSKS' region element; that stretch reads KLSKR. An ATP-binding site is contributed by Lys241.

Belongs to the class-I aminoacyl-tRNA synthetase family. Glutamate--tRNA ligase type 1 subfamily. As to quaternary structure, monomer. It depends on Zn(2+) as a cofactor.

Its subcellular location is the cytoplasm. The catalysed reaction is tRNA(Glu) + L-glutamate + ATP = L-glutamyl-tRNA(Glu) + AMP + diphosphate. In terms of biological role, catalyzes the attachment of glutamate to tRNA(Glu) in a two-step reaction: glutamate is first activated by ATP to form Glu-AMP and then transferred to the acceptor end of tRNA(Glu). The protein is Glutamate--tRNA ligase of Proteus mirabilis (strain HI4320).